The following is a 296-amino-acid chain: N-acetylmuramic acid 6-phosphate etherase 2 (296 aa).

The SIS domain maps to 55-218 (IVANFKAGGR…STASMVGIGK (164 aa)). Glu-83 functions as the Proton donor in the catalytic mechanism. Glu-114 is a catalytic residue.

Belongs to the GCKR-like family. MurNAc-6-P etherase subfamily. In terms of assembly, homodimer.

It catalyses the reaction N-acetyl-D-muramate 6-phosphate + H2O = N-acetyl-D-glucosamine 6-phosphate + (R)-lactate. The protein operates within amino-sugar metabolism; N-acetylmuramate degradation. Functionally, specifically catalyzes the cleavage of the D-lactyl ether substituent of MurNAc 6-phosphate, producing GlcNAc 6-phosphate and D-lactate. In Lactiplantibacillus plantarum (strain ATCC BAA-793 / NCIMB 8826 / WCFS1) (Lactobacillus plantarum), this protein is N-acetylmuramic acid 6-phosphate etherase 2.